The sequence spans 200 residues: Pyridoxal 5'-phosphate synthase subunit PdxT (200 aa).

An L-glutamine-binding site is contributed by 52-54 (GES). C84 acts as the Nucleophile in catalysis. Residues R116 and 145–146 (IR) contribute to the L-glutamine site. Catalysis depends on charge relay system residues H181 and E183.

Belongs to the glutaminase PdxT/SNO family. In the presence of PdxS, forms a dodecamer of heterodimers. Only shows activity in the heterodimer.

The catalysed reaction is aldehydo-D-ribose 5-phosphate + D-glyceraldehyde 3-phosphate + L-glutamine = pyridoxal 5'-phosphate + L-glutamate + phosphate + 3 H2O + H(+). It catalyses the reaction L-glutamine + H2O = L-glutamate + NH4(+). It participates in cofactor biosynthesis; pyridoxal 5'-phosphate biosynthesis. Functionally, catalyzes the hydrolysis of glutamine to glutamate and ammonia as part of the biosynthesis of pyridoxal 5'-phosphate. The resulting ammonia molecule is channeled to the active site of PdxS. This is Pyridoxal 5'-phosphate synthase subunit PdxT from Sulfolobus acidocaldarius (strain ATCC 33909 / DSM 639 / JCM 8929 / NBRC 15157 / NCIMB 11770).